Consider the following 126-residue polypeptide: Glycine cleavage system H protein (126 aa).

A Lipoyl-binding domain is found at 21 to 103; that stretch reads TVTIGISEHA…YDGGWIVKVK (83 aa). An N6-lipoyllysine modification is found at lysine 62.

The protein belongs to the GcvH family. In terms of assembly, the glycine cleavage system is composed of four proteins: P, T, L and H. (R)-lipoate serves as cofactor.

In terms of biological role, the glycine cleavage system catalyzes the degradation of glycine. The H protein shuttles the methylamine group of glycine from the P protein to the T protein. The polypeptide is Glycine cleavage system H protein (Vibrio cholerae serotype O1 (strain ATCC 39541 / Classical Ogawa 395 / O395)).